The following is a 368-amino-acid chain: MVAPHLWLRAETKPLEERSALTPRTAKILADAGFQITIERSSQRAFKDKEFERLGFPMVPEGSWRHAPKDAYIIGLKELPENDNSPLKHTHIQFAHCYKNQEGWREVLSRFPAGNGLLYDLEFLQDDNGRRVAAFGYHAGFAGSAISCLVWAHQLLHPNKQFPAIRPFPNEKSLVRHVARQVRLALKKNNNQYPRILVIGALGRCGTGACDLASKIGIPFDNILRWDINETKKGGPFTEITESDIFVNCIYLSMPIPKFCTVESLNVPNRKLRVVCDVSCDTTNPNNPIPIYNVNTTFDHPTVEVKGVTTPPPLEVISIDHLPTLLPRESSEAFSEALIPSLLALKDVDNAPVWVRAKKLYETMVQKL.

L-saccharopine-binding residues include Arg18 and Lys77. Residue Lys77 is the Proton acceptor of the active site. Ser85 carries the phosphoserine modification. The active-site Proton donor is the His96. Gln101 contributes to the L-saccharopine binding site. An NAD(+)-binding site is contributed by Arg130. 2 residues coordinate L-saccharopine: Arg131 and Phe135. Residues 203–204 (GR), Asp227, Thr231, Tyr251, and Val278 each bind NAD(+). An intrachain disulfide couples Cys205 to Cys249. Position 279 to 281 (279 to 281 (SCD)) interacts with L-saccharopine. 319-322 (IDHL) serves as a coordination point for NAD(+).

The protein belongs to the AlaDH/PNT family. As to quaternary structure, monomer.

It carries out the reaction L-saccharopine + NAD(+) + H2O = L-lysine + 2-oxoglutarate + NADH + H(+). It functions in the pathway amino-acid biosynthesis; L-lysine biosynthesis via AAA pathway; L-lysine from L-alpha-aminoadipate (fungal route): step 3/3. Catalyzes the NAD(+)-dependent cleavage of saccharopine to L-lysine and 2-oxoglutarate, the final step in the alpha-aminoadipate (AAA) pathway for lysin biosynthesis. This is Saccharopine dehydrogenase [NAD(+), L-lysine-forming] from Schizosaccharomyces pombe (strain 972 / ATCC 24843) (Fission yeast).